The following is a 597-amino-acid chain: Arginine--tRNA ligase (597 aa).

The span at 23–32 (QAAAARQASQ) shows a compositional bias: low complexity. Positions 23-43 (QAAAARQASQPLDPQLAPASK) are disordered. The short motif at 137 to 147 (PNIAKEMHVGH) is the 'HIGH' region element.

This sequence belongs to the class-I aminoacyl-tRNA synthetase family. In terms of assembly, monomer.

It is found in the cytoplasm. The enzyme catalyses tRNA(Arg) + L-arginine + ATP = L-arginyl-tRNA(Arg) + AMP + diphosphate. The protein is Arginine--tRNA ligase of Synechococcus sp. (strain WH7803).